Consider the following 372-residue polypeptide: Lipoyl synthase, mitochondrial (372 aa).

[4Fe-4S] cluster contacts are provided by Cys106, Cys111, Cys117, Cys137, Cys141, Cys144, and Ser352. Residues 122 to 341 (EYGTATATIM…EKAGNELGFL (220 aa)) form the Radical SAM core domain.

Belongs to the radical SAM superfamily. Lipoyl synthase family. The cofactor is [4Fe-4S] cluster.

It is found in the mitochondrion. The enzyme catalyses [[Fe-S] cluster scaffold protein carrying a second [4Fe-4S](2+) cluster] + N(6)-octanoyl-L-lysyl-[protein] + 2 oxidized [2Fe-2S]-[ferredoxin] + 2 S-adenosyl-L-methionine + 4 H(+) = [[Fe-S] cluster scaffold protein] + N(6)-[(R)-dihydrolipoyl]-L-lysyl-[protein] + 4 Fe(3+) + 2 hydrogen sulfide + 2 5'-deoxyadenosine + 2 L-methionine + 2 reduced [2Fe-2S]-[ferredoxin]. It participates in protein modification; protein lipoylation via endogenous pathway; protein N(6)-(lipoyl)lysine from octanoyl-[acyl-carrier-protein]: step 2/2. Catalyzes the radical-mediated insertion of two sulfur atoms into the C-6 and C-8 positions of the octanoyl moiety bound to the lipoyl domains of lipoate-dependent enzymes, thereby converting the octanoylated domains into lipoylated derivatives. The polypeptide is Lipoyl synthase, mitochondrial (lias) (Xenopus laevis (African clawed frog)).